Reading from the N-terminus, the 397-residue chain is Adenylosuccinate synthetase (397 aa).

GTP-binding positions include 11 to 17 and 39 to 41; these read GDEGKGK and GHT. Catalysis depends on Asp12, which acts as the Proton acceptor. 2 residues coordinate Mg(2+): Asp12 and Gly39. IMP-binding positions include 12–15, 37–40, Thr125, Arg139, Gln212, Thr227, and Arg290; these read DEGK and NAGH. Catalysis depends on His40, which acts as the Proton donor. 286 to 292 contacts substrate; the sequence is STTGRPR. GTP-binding positions include Arg292, 318-320, and 386-388; these read KAD and STG.

The protein belongs to the adenylosuccinate synthetase family. Homodimer. Mg(2+) is required as a cofactor.

It localises to the cytoplasm. It catalyses the reaction IMP + L-aspartate + GTP = N(6)-(1,2-dicarboxyethyl)-AMP + GDP + phosphate + 2 H(+). It participates in purine metabolism; AMP biosynthesis via de novo pathway; AMP from IMP: step 1/2. Plays an important role in the de novo pathway of purine nucleotide biosynthesis. Catalyzes the first committed step in the biosynthesis of AMP from IMP. The protein is Adenylosuccinate synthetase of Thermotoga maritima (strain ATCC 43589 / DSM 3109 / JCM 10099 / NBRC 100826 / MSB8).